Here is a 71-residue protein sequence, read N- to C-terminus: Paralithocin 2 (71 aa).

An N-terminal signal peptide occupies residues 1–23 (MGAAKVLLVVLAVMVAVPNLAEG). 4 cysteine pairs are disulfide-bonded: Cys29/Cys58, Cys34/Cys54, Cys39/Cys52, and Cys44/Cys55. Arg70 bears the Arginine amide; partial mark.

This sequence belongs to the paralithocin family. Post-translationally, the amidated form is probably the active form.

In terms of biological role, has antibacterial activity, mainly against marine Gram-positive bacteria like C.maltaromaticum (MIC=50 uM), C.mobile (MIC=50 uM), C.divergens (MIC=50 uM) and C.funditum (MIC=25 uM) but also against C.glutamicum (MIC=12.5 uM). Has very little or no activity against Gram-negative bacteria. In Paralithodes camtschaticus (Red king crab), this protein is Paralithocin 2.